Here is a 189-residue protein sequence, read N- to C-terminus: Elongation factor P (189 aa).

This sequence belongs to the elongation factor P family.

The protein localises to the cytoplasm. It participates in protein biosynthesis; polypeptide chain elongation. Its function is as follows. Involved in peptide bond synthesis. Stimulates efficient translation and peptide-bond synthesis on native or reconstituted 70S ribosomes in vitro. Probably functions indirectly by altering the affinity of the ribosome for aminoacyl-tRNA, thus increasing their reactivity as acceptors for peptidyl transferase. This Campylobacter fetus subsp. fetus (strain 82-40) protein is Elongation factor P.